Consider the following 523-residue polypeptide: REST corepressor 2 (523 aa).

Positions 1-43 are disordered; sequence MPSVMEKPSAGSGILSRSRAKTAPNGGQPHSEDDSSEEEHSHD. Residues 30 to 43 are compositionally biased toward basic and acidic residues; sequence HSEDDSSEEEHSHD. Phosphoserine occurs at positions 31, 35, 36, and 63. Positions 44 to 129 constitute an ELM2 domain; that stretch reads SMIRVGTNYQ…KSLADLANFT (86 aa). Lys88 is covalently cross-linked (Glycyl lysine isopeptide (Lys-Gly) (interchain with G-Cter in SUMO2)). The 52-residue stretch at 130 to 181 folds into the SANT 1 domain; sequence PFPDEWTVEDKVLFEQAFGFHGKCFQRIQQMLPDKVIPSLVKYYYSWKKTRS. Residues 185 to 244 form a disordered region; sequence VMDRQARRLGGRKDKEDSDELEEGRGAVSEGEPDTGDPKREPLPSRPLNARPGPGKKEVQ. Ser202 bears the Phosphoserine mark. The stretch at 283–314 forms a coiled coil; that stretch reads TLRGLDSQLISLKRQVQSMKQTNSSLRQALEG. The region spanning 327–378 is the SANT 2 domain; that stretch reads KFNSRWTTDEQLLAVQAIRRYGKDFGAIAEVIGNKTLTQVKTFFVSYRRRFN. The disordered stretch occupies residues 387–523; that stretch reads EAEQDGAPAA…APLEPPAPSL (137 aa). Residues 432–459 show a composition bias toward pro residues; the sequence is SVPPAPPPPPPPTSLSQPPPLLRPPLPT. Over residues 460 to 482 the composition is skewed to low complexity; sequence APTLLRQPPPLQQGRFLQPRLAP. Asymmetric dimethylarginine is present on Arg479. Residues 504–523 show a composition bias toward pro residues; that stretch reads GPQPPPTLVGAPLEPPAPSL.

Belongs to the CoREST family. Predominantly, but not exclusively, expressed in neural tissue. Strongly expressed in neural domains of the developing brain of the developing mouse CNS.

It is found in the nucleus. Its function is as follows. May act as a component of a corepressor complex that represses transcription. This is REST corepressor 2 (Rcor2) from Mus musculus (Mouse).